We begin with the raw amino-acid sequence, 87 residues long: Small ribosomal subunit protein uS15 (87 aa).

Residues 1 to 19 show a composition bias toward basic and acidic residues; that stretch reads MEKARKEQLIREYATHEGD. The segment at 1–22 is disordered; that stretch reads MEKARKEQLIREYATHEGDTGS.

Belongs to the universal ribosomal protein uS15 family. Part of the 30S ribosomal subunit. Forms a bridge to the 50S subunit in the 70S ribosome, contacting the 23S rRNA.

Functionally, one of the primary rRNA binding proteins, it binds directly to 16S rRNA where it helps nucleate assembly of the platform of the 30S subunit by binding and bridging several RNA helices of the 16S rRNA. Forms an intersubunit bridge (bridge B4) with the 23S rRNA of the 50S subunit in the ribosome. The protein is Small ribosomal subunit protein uS15 of Clostridium novyi (strain NT).